Reading from the N-terminus, the 273-residue chain is 4-hydroxy-tetrahydrodipicolinate reductase (273 aa).

NAD(+)-binding positions include 12–17 (GAGGRM) and E38. NADP(+) is bound at residue R39. NAD(+) contacts are provided by residues 102 to 104 (GTT) and 126 to 129 (AANF). H159 serves as the catalytic Proton donor/acceptor. H160 serves as a coordination point for (S)-2,3,4,5-tetrahydrodipicolinate. The active-site Proton donor is the K163. 169–170 (GT) contributes to the (S)-2,3,4,5-tetrahydrodipicolinate binding site.

It belongs to the DapB family. In terms of assembly, homotetramer.

It is found in the cytoplasm. The enzyme catalyses (S)-2,3,4,5-tetrahydrodipicolinate + NAD(+) + H2O = (2S,4S)-4-hydroxy-2,3,4,5-tetrahydrodipicolinate + NADH + H(+). The catalysed reaction is (S)-2,3,4,5-tetrahydrodipicolinate + NADP(+) + H2O = (2S,4S)-4-hydroxy-2,3,4,5-tetrahydrodipicolinate + NADPH + H(+). The protein operates within amino-acid biosynthesis; L-lysine biosynthesis via DAP pathway; (S)-tetrahydrodipicolinate from L-aspartate: step 4/4. In terms of biological role, catalyzes the conversion of 4-hydroxy-tetrahydrodipicolinate (HTPA) to tetrahydrodipicolinate. This is 4-hydroxy-tetrahydrodipicolinate reductase from Photorhabdus laumondii subsp. laumondii (strain DSM 15139 / CIP 105565 / TT01) (Photorhabdus luminescens subsp. laumondii).